A 450-amino-acid polypeptide reads, in one-letter code: Protein DA1-related 3 (450 aa).

Residues 1 to 46 adopt a coiled-coil conformation; it reads MVRRKRQEEDEKIEIERVKEESLKLAKQAEEKRRLEESKEQGKRIQ. Basic and acidic residues-rich tracts occupy residues 27–47 and 56–69; these read KQAEEKRRLEESKEQGKRIQV and TSKDKGQINHSKDV. The disordered stretch occupies residues 27 to 87; that stretch reads KQAEEKRRLE…PSIDGKSEIG (61 aa).

The sequence is that of Protein DA1-related 3 (DAR3) from Arabidopsis thaliana (Mouse-ear cress).